A 427-amino-acid chain; its full sequence is Serine--tRNA ligase (427 aa).

231–233 is an L-serine binding site; it reads TAE. ATP is bound at residue 262–264; sequence RSE. Position 285 (glutamate 285) interacts with L-serine. 349-352 lines the ATP pocket; it reads EISS. Position 385 (serine 385) interacts with L-serine.

The protein belongs to the class-II aminoacyl-tRNA synthetase family. Type-1 seryl-tRNA synthetase subfamily. In terms of assembly, homodimer. The tRNA molecule binds across the dimer.

Its subcellular location is the cytoplasm. It catalyses the reaction tRNA(Ser) + L-serine + ATP = L-seryl-tRNA(Ser) + AMP + diphosphate + H(+). The enzyme catalyses tRNA(Sec) + L-serine + ATP = L-seryl-tRNA(Sec) + AMP + diphosphate + H(+). Its pathway is aminoacyl-tRNA biosynthesis; selenocysteinyl-tRNA(Sec) biosynthesis; L-seryl-tRNA(Sec) from L-serine and tRNA(Sec): step 1/1. Functionally, catalyzes the attachment of serine to tRNA(Ser). Is also able to aminoacylate tRNA(Sec) with serine, to form the misacylated tRNA L-seryl-tRNA(Sec), which will be further converted into selenocysteinyl-tRNA(Sec). This Listeria innocua serovar 6a (strain ATCC BAA-680 / CLIP 11262) protein is Serine--tRNA ligase.